A 259-amino-acid polypeptide reads, in one-letter code: Nuclear egress protein 1 (259 aa).

A CCCH-type zinc finger spans residues 80 to 184 (CLDLSPYANE…YVVFQTRTLH (105 aa)).

Belongs to the herpesviridae NEC1 protein family. Forms a heterohexameric complex with NEC2. Interacts with capsid vertex specific component 2/CVC2; this interaction directs the capsid to the host inner nuclear membrane to initiate budding. Post-translationally, phosphorylated at serine residues in the N-terminus. This phosphorylation regulates the localization within the inner nuclear membrane.

It is found in the host nucleus inner membrane. In terms of biological role, plays an essential role in virion nuclear egress, the first step of virion release from infected cell. Within the host nucleus, NEC1 interacts with the newly formed capsid through the vertexes and directs it to the inner nuclear membrane by associating with NEC2. Induces the budding of the capsid at the inner nuclear membrane as well as its envelopment into the perinuclear space. There, the NEC1/NEC2 complex promotes the fusion of the enveloped capsid with the outer nuclear membrane and the subsequent release of the viral capsid into the cytoplasm where it will reach the secondary budding sites in the host Golgi or trans-Golgi network. The sequence is that of Nuclear egress protein 1 from Homo sapiens (Human).